The following is a 104-amino-acid chain: N(4)-acetylcytidine amidohydrolase (104 aa).

Positions 6 to 94 constitute an ASCH domain; it reads ITFFQRFQND…IAEIYPNQTQ (89 aa). Residue K21 is the Proton acceptor of the active site. T24 serves as the catalytic Nucleophile. The Proton donor role is filled by E74.

Belongs to the N(4)-acetylcytidine amidohydrolase family.

It carries out the reaction N(4)-acetylcytidine + H2O = cytidine + acetate + H(+). The catalysed reaction is N(4)-acetyl-2'-deoxycytidine + H2O = 2'-deoxycytidine + acetate + H(+). It catalyses the reaction N(4)-acetylcytosine + H2O = cytosine + acetate + H(+). In terms of biological role, catalyzes the hydrolysis of N(4)-acetylcytidine (ac4C). The chain is N(4)-acetylcytidine amidohydrolase (yqfB) from Salmonella agona (strain SL483).